A 323-amino-acid polypeptide reads, in one-letter code: Olfactory receptor 52B2 (323 aa).

Over 1 to 27 (MSHTNVTIFHPAVFVLPGIPGLEAYHI) the chain is Extracellular. N-linked (GlcNAc...) asparagine glycosylation occurs at N5. A helical membrane pass occupies residues 28-48 (WLSIPLCLIYITAVLGNSILI). Residues 49–56 (VVIVMERN) are Cytoplasmic-facing. A helical membrane pass occupies residues 57 to 77 (LHVPMYFFLSMLAVMDILLST). The Extracellular portion of the chain corresponds to 78-101 (TTVPKALAIFWLQAHNIAFDACVT). A disulfide bond links C99 and C191. The helical transmembrane segment at 102-122 (QGFFVHMMFVGESAILLAMAF) threads the bilayer. The Cytoplasmic portion of the chain corresponds to 123 to 141 (DRFVAICAPLRYTTVLTWP). The helical transmembrane segment at 142 to 162 (VVGRIALAVITRSFCIIFPVI) threads the bilayer. At 163–198 (FLLKRLPFCLTNIVPHSYCEHIGVARLACADITVNI) the chain is on the extracellular side. The chain crosses the membrane as a helical span at residues 199 to 219 (WYGFSVPIVMVILDVILIAVS). The Cytoplasmic portion of the chain corresponds to 220–239 (YSLILRAVFRLPSQDARHKA). Residues 240–260 (LSTCGSHLCVILMFYVPSFFT) traverse the membrane as a helical segment. The Extracellular portion of the chain corresponds to 261-275 (LLTHHFGRNIPQHVH). A helical membrane pass occupies residues 276–296 (ILLANLYVAVPPMLNPIVYGV). Residues 297-323 (KTKQIREGVAHRFFDIKTWCCTSPLGS) are Cytoplasmic-facing.

It belongs to the G-protein coupled receptor 1 family.

Its subcellular location is the cell membrane. Functionally, odorant receptor. This chain is Olfactory receptor 52B2 (OR52B2), found in Homo sapiens (Human).